The following is a 79-amino-acid chain: MSRTCQITRKKPMNGNKRSHAMNATKRWFIPNIHSHRFWIENKKKFIKLRISTKGIRLVDKLGIEQFLSIVSFKNKKNY.

Belongs to the bacterial ribosomal protein bL28 family.

This Blochmanniella floridana protein is Large ribosomal subunit protein bL28.